The chain runs to 512 residues: Flavonoid 3'-monooxygenase (512 aa).

Residues 1–21 (MEILSLILYTVIFSFLLQFIL) traverse the membrane as a helical segment. At 22–512 (RSFFRKRYPL…PRLEAQAYIG (491 aa)) the chain is on the cytoplasmic side. Position 447 (Cys-447) interacts with heme.

This sequence belongs to the cytochrome P450 family. Heme is required as a cofactor. As to expression, high expression in petals and ovaries and to a lower extent in sepals, pedicels, anthers and stems. Not detected in leaves, style or roots.

It is found in the endoplasmic reticulum membrane. It catalyses the reaction a 3'-unsubstituted flavone + reduced [NADPH--hemoprotein reductase] + O2 = a 3'-hydroxyflavone + oxidized [NADPH--hemoprotein reductase] + H2O + H(+). It participates in secondary metabolite biosynthesis; flavonoid biosynthesis. In terms of biological role, catalyzes the 3'-hydroxylation of the flavonoid B-ring to the 3',4'-hydroxylated state. Convert naringenin to eriodictyol and dihydrokaempferol to dihydroquercetin. In Petunia hybrida (Petunia), this protein is Flavonoid 3'-monooxygenase (CYP75B2).